Reading from the N-terminus, the 218-residue chain is 3,4-dihydroxy-2-butanone 4-phosphate synthase (218 aa).

D-ribulose 5-phosphate-binding positions include 38-39, Asp43, 151-155, and Glu175; these read RE and RRGHT. Glu39 serves as a coordination point for Mg(2+). A Mg(2+)-binding site is contributed by His154.

This sequence belongs to the DHBP synthase family. As to quaternary structure, homodimer. Mg(2+) is required as a cofactor. Requires Mn(2+) as cofactor.

The catalysed reaction is D-ribulose 5-phosphate = (2S)-2-hydroxy-3-oxobutyl phosphate + formate + H(+). The protein operates within cofactor biosynthesis; riboflavin biosynthesis; 2-hydroxy-3-oxobutyl phosphate from D-ribulose 5-phosphate: step 1/1. Its function is as follows. Catalyzes the conversion of D-ribulose 5-phosphate to formate and 3,4-dihydroxy-2-butanone 4-phosphate. This chain is 3,4-dihydroxy-2-butanone 4-phosphate synthase, found in Vibrio cholerae serotype O1 (strain ATCC 39541 / Classical Ogawa 395 / O395).